The primary structure comprises 190 residues: Glutathione peroxidase 2 (190 aa).

Residue U40 is part of the active site. Residue U40 is a non-standard amino acid, selenocysteine.

The protein belongs to the glutathione peroxidase family. In terms of assembly, homotetramer.

The protein localises to the cytoplasm. It localises to the cytosol. The enzyme catalyses 2 glutathione + H2O2 = glutathione disulfide + 2 H2O. The catalysed reaction is a hydroperoxy polyunsaturated fatty acid + 2 glutathione = a hydroxy polyunsaturated fatty acid + glutathione disulfide + H2O. It catalyses the reaction tert-butyl hydroperoxide + 2 glutathione = tert-butanol + glutathione disulfide + H2O. It carries out the reaction cumene hydroperoxide + 2 glutathione = 2-phenylpropan-2-ol + glutathione disulfide + H2O. The enzyme catalyses (13S)-hydroperoxy-(9Z,11E)-octadecadienoate + 2 glutathione = (13S)-hydroxy-(9Z,11E)-octadecadienoate + glutathione disulfide + H2O. The catalysed reaction is (5S)-hydroperoxy-(6E,8Z,11Z,14Z)-eicosatetraenoate + 2 glutathione = (5S)-hydroxy-(6E,8Z,11Z,14Z)-eicosatetraenoate + glutathione disulfide + H2O. It catalyses the reaction (12R)-hydroperoxy-(5Z,8Z,10E,14Z)-eicosatetraenoate + 2 glutathione = (12R)-hydroxy-(5Z,8Z,10E,14Z)-eicosatetraenoate + glutathione disulfide + H2O. It carries out the reaction (15S)-hydroperoxy-(5Z,8Z,11Z,13E)-eicosatetraenoate + 2 glutathione = (15S)-hydroxy-(5Z,8Z,11Z,13E)-eicosatetraenoate + glutathione disulfide + H2O. Catalyzes the reduction of hydroperoxides in a glutathione-dependent manner thus regulating cellular redox homeostasis. Can reduce small soluble hydroperoxides such as H2O2, cumene hydroperoxide and tert-butyl hydroperoxide, as well as several fatty acid-derived hydroperoxides. Cannot reduce phosphatidycholine hydroperoxide. In Mus musculus (Mouse), this protein is Glutathione peroxidase 2 (Gpx2).